The primary structure comprises 399 residues: MSFSRLLTPRILLDTTAVFPPSSSVVAPSLSRQLRCTRTGGSPPAPPHRLVARRAMSNGAAEPAIYGGGGGAQQAASSAAARRVTLATLRGKHRRGEPISMVTAYDYPSGVHVDAAGFDICLVGDSAAMVAHGHDNTLPISLDLMIEHCRAVARGAARTFLVGDLPFGSYEASTAQAVGSAVRVMKEGGVNSIKLEGSAPSRISAARAIVDAGIAVMGHIGLTPQSVSALGGFRPQGKTVESAVKVVEAALALQEAGCFAVVLECVPAPVAAAATSALTIPTIGIGAGPFCSGQVLVYHDLLGTFQTSHAKVSPKFCKQYGNIGDVINRALSKYKQEVETQSFPGPSHTPYKLAATDVDAFLNALKMKGLNVAADAAADAVEYTDEKEINGTPQLKVYA.

Residues 1–90 (MSFSRLLTPR…ARRVTLATLR (90 aa)) constitute a mitochondrion transit peptide. Positions 125 and 164 each coordinate Mg(2+). Residues 125–126 (DS), D164, and K194 contribute to the 3-methyl-2-oxobutanoate site. A Mg(2+)-binding site is contributed by E196. The active-site Proton acceptor is the E264.

It belongs to the PanB family. Requires Mg(2+) as cofactor.

The protein resides in the mitochondrion. It carries out the reaction 3-methyl-2-oxobutanoate + (6R)-5,10-methylene-5,6,7,8-tetrahydrofolate + H2O = 2-dehydropantoate + (6S)-5,6,7,8-tetrahydrofolate. Its pathway is cofactor biosynthesis; (R)-pantothenate biosynthesis; (R)-pantoate from 3-methyl-2-oxobutanoate: step 1/2. Catalyzes the reversible reaction in which hydroxymethyl group from 5,10-methylenetetrahydrofolate is transferred onto alpha-ketoisovalerate to form ketopantoate. The sequence is that of 3-methyl-2-oxobutanoate hydroxymethyltransferase 2, mitochondrial (KPHMT2) from Oryza sativa subsp. japonica (Rice).